Reading from the N-terminus, the 272-residue chain is Phosphate import ATP-binding protein PstB (272 aa).

One can recognise an ABC transporter domain in the interval 20–267 (VKKEVVYETN…PADQRTADYI (248 aa)). 58-65 (GPSGCGKS) is an ATP binding site.

The protein belongs to the ABC transporter superfamily. Phosphate importer (TC 3.A.1.7) family. As to quaternary structure, the complex is composed of two ATP-binding proteins (PstB), two transmembrane proteins (PstC and PstA) and a solute-binding protein (PstS).

It is found in the cell membrane. It carries out the reaction phosphate(out) + ATP + H2O = ADP + 2 phosphate(in) + H(+). Functionally, part of the ABC transporter complex PstSACB involved in phosphate import. Responsible for energy coupling to the transport system. This Geobacillus kaustophilus (strain HTA426) protein is Phosphate import ATP-binding protein PstB.